Here is a 234-residue protein sequence, read N- to C-terminus: Sugar fermentation stimulation protein A (234 aa).

The segment at residues 201 to 220 (LLSEAQNKGVEVLAYKAELS) is a DNA-binding region (H-T-H motif).

The protein belongs to the SfsA family.

Binds to DNA non-specifically. Could be a regulatory factor involved in maltose metabolism. The protein is Sugar fermentation stimulation protein A of Salmonella typhi.